Here is a 185-residue protein sequence, read N- to C-terminus: Large ribosomal subunit protein uL5 (185 aa).

The protein belongs to the universal ribosomal protein uL5 family. As to quaternary structure, part of the 50S ribosomal subunit; part of the 5S rRNA/L5/L18/L25 subcomplex. Contacts the 5S rRNA and the P site tRNA. Forms a bridge to the 30S subunit in the 70S ribosome.

In terms of biological role, this is one of the proteins that bind and probably mediate the attachment of the 5S RNA into the large ribosomal subunit, where it forms part of the central protuberance. In the 70S ribosome it contacts protein S13 of the 30S subunit (bridge B1b), connecting the 2 subunits; this bridge is implicated in subunit movement. Contacts the P site tRNA; the 5S rRNA and some of its associated proteins might help stabilize positioning of ribosome-bound tRNAs. The protein is Large ribosomal subunit protein uL5 of Bartonella tribocorum (strain CIP 105476 / IBS 506).